We begin with the raw amino-acid sequence, 74 residues long: ATP synthase subunit c (74 aa).

The next 2 membrane-spanning stretches (helical) occupy residues 8 to 28 (FIGIGFMAIGMYGAALGVSNI) and 52 to 72 (IGAGLAEAMGLFAFVIAMLLI).

It belongs to the ATPase C chain family. As to quaternary structure, F-type ATPases have 2 components, F(1) - the catalytic core - and F(0) - the membrane proton channel. F(1) has five subunits: alpha(3), beta(3), gamma(1), delta(1), epsilon(1). F(0) has three main subunits: a(1), b(2) and c(10-14). The alpha and beta chains form an alternating ring which encloses part of the gamma chain. F(1) is attached to F(0) by a central stalk formed by the gamma and epsilon chains, while a peripheral stalk is formed by the delta and b chains.

The protein localises to the cell inner membrane. Its function is as follows. F(1)F(0) ATP synthase produces ATP from ADP in the presence of a proton or sodium gradient. F-type ATPases consist of two structural domains, F(1) containing the extramembraneous catalytic core and F(0) containing the membrane proton channel, linked together by a central stalk and a peripheral stalk. During catalysis, ATP synthesis in the catalytic domain of F(1) is coupled via a rotary mechanism of the central stalk subunits to proton translocation. Functionally, key component of the F(0) channel; it plays a direct role in translocation across the membrane. A homomeric c-ring of between 10-14 subunits forms the central stalk rotor element with the F(1) delta and epsilon subunits. This Rickettsia typhi (strain ATCC VR-144 / Wilmington) protein is ATP synthase subunit c.